Reading from the N-terminus, the 103-residue chain is Pyrimidine/purine nucleoside phosphorylase (103 aa).

Belongs to the nucleoside phosphorylase PpnP family.

The enzyme catalyses a purine D-ribonucleoside + phosphate = a purine nucleobase + alpha-D-ribose 1-phosphate. It catalyses the reaction adenosine + phosphate = alpha-D-ribose 1-phosphate + adenine. The catalysed reaction is cytidine + phosphate = cytosine + alpha-D-ribose 1-phosphate. It carries out the reaction guanosine + phosphate = alpha-D-ribose 1-phosphate + guanine. The enzyme catalyses inosine + phosphate = alpha-D-ribose 1-phosphate + hypoxanthine. It catalyses the reaction thymidine + phosphate = 2-deoxy-alpha-D-ribose 1-phosphate + thymine. The catalysed reaction is uridine + phosphate = alpha-D-ribose 1-phosphate + uracil. It carries out the reaction xanthosine + phosphate = alpha-D-ribose 1-phosphate + xanthine. Its function is as follows. Catalyzes the phosphorolysis of diverse nucleosides, yielding D-ribose 1-phosphate and the respective free bases. Can use uridine, adenosine, guanosine, cytidine, thymidine, inosine and xanthosine as substrates. Also catalyzes the reverse reactions. This Shewanella putrefaciens (strain CN-32 / ATCC BAA-453) protein is Pyrimidine/purine nucleoside phosphorylase.